We begin with the raw amino-acid sequence, 170 residues long: Ribulose bisphosphate carboxylase small subunit, chloroplastic (170 aa).

2 transit peptides (chloroplast) span residues 1–46 (MAPT…GRIR) and 1–47 (MAPT…RIRC).

Belongs to the RuBisCO small chain family. Heterohexadecamer of 8 large and 8 small subunits.

The protein resides in the plastid. It is found in the chloroplast. Functionally, ruBisCO catalyzes two reactions: the carboxylation of D-ribulose 1,5-bisphosphate, the primary event in carbon dioxide fixation, as well as the oxidative fragmentation of the pentose substrate. Both reactions occur simultaneously and in competition at the same active site. Although the small subunit is not catalytic it is essential for maximal activity. This is Ribulose bisphosphate carboxylase small subunit, chloroplastic from Zea mays (Maize).